A 139-amino-acid chain; its full sequence is Non-structural protein 1 (139 aa).

The short motif at 136–139 (DLNP) is the DLNP; interaction with MAP1B element.

This sequence belongs to the pneumovirus non-structural protein 1 family. Monomer. Homomultimer. Heteromultimer with NS2. Interacts with the matrix protein M. Interacts with host ELOC and CUL2; this interaction allows NS1 to form an active E3 ligase with ELOC and CUL2. Interacts with host IRF3; this interaction leads to the disrupted association of IRF3 with CREBBP and thus reduced binding of IRF3 to the IFN-beta promoter. Interacts with host MAVS; this interaction prevents MAVS binding to RIGI and inhibits signaling pathway leading to interferon production. Interacts with host MAP1B/microtubule-associated protein 1B. Interacts with host TRIM25 (via SPRY domain); this interaction suppresses RIGI ubiquitination and results in decreased interaction between RIGI and MAVS.

It localises to the host cytoplasm. Its subcellular location is the host mitochondrion. It is found in the host nucleus. Its function is as follows. Plays a major role in antagonizing the type I IFN-mediated antiviral response by degrading or inhibiting multiple cellular factors required for either IFN induction or response pathways. Acts cooperatively with NS2 to repress activation and nuclear translocation of host IFN-regulatory factor IRF3. Also disrupts the association of IRF3 with CREBBP. Interacts with host mitochondrial-associated membrane (MAM) MAVS and prevents the interaction with RIGI. Interacts with TRIM25 to suppress TRIM25-mediated RIGI ubiquitination and thereby RIGI-MAVS interaction. Together with NS2, participates in the proteasomal degradation of host STAT2, IRF3, IRF7, TBK1 and RIGI through a NS-degradasome involving CUL2 and Elongin-C. The degradasome requires an intact mitochondrial MAVS. Decreases the levels of host TRAF3 and IKBKE/IKK-epsilon. As functions other than disruptions of the type I IFN-mediated antiviral signaling pathways, induces host SOCS1 and SOCS3 expression. Suppresses premature apoptosis by an NF-kappa-B-dependent, interferon-independent mechanism and thus facilitates virus growth. Additionally, NS1 may serve some inhibitory role in viral transcription and RNA replication. Suppresses proliferation and activation of host CD103+ CD8+ cytotoxic T-lymphocytes and Th17 helper T-lymphocytes. This chain is Non-structural protein 1 (1C), found in Homo sapiens (Human).